The primary structure comprises 501 residues: Glucose-6-phosphate isomerase (501 aa).

The disordered stretch occupies residues 78-101 (GIANPTENRAAEHSAERGDGAPES). The segment covering 86-97 (RAAEHSAERGDG) has biased composition (basic and acidic residues). The active-site Proton donor is the Glu-333. Catalysis depends on residues His-364 and Lys-474.

Belongs to the GPI family.

Its subcellular location is the cytoplasm. It catalyses the reaction alpha-D-glucose 6-phosphate = beta-D-fructose 6-phosphate. It participates in carbohydrate biosynthesis; gluconeogenesis. It functions in the pathway carbohydrate degradation; glycolysis; D-glyceraldehyde 3-phosphate and glycerone phosphate from D-glucose: step 2/4. Catalyzes the reversible isomerization of glucose-6-phosphate to fructose-6-phosphate. This chain is Glucose-6-phosphate isomerase, found in Sphingopyxis alaskensis (strain DSM 13593 / LMG 18877 / RB2256) (Sphingomonas alaskensis).